The chain runs to 207 residues: 3-isopropylmalate dehydratase small subunit (207 aa).

It belongs to the LeuD family. LeuD type 1 subfamily. As to quaternary structure, heterodimer of LeuC and LeuD.

It carries out the reaction (2R,3S)-3-isopropylmalate = (2S)-2-isopropylmalate. It functions in the pathway amino-acid biosynthesis; L-leucine biosynthesis; L-leucine from 3-methyl-2-oxobutanoate: step 2/4. Functionally, catalyzes the isomerization between 2-isopropylmalate and 3-isopropylmalate, via the formation of 2-isopropylmaleate. The sequence is that of 3-isopropylmalate dehydratase small subunit from Gluconacetobacter diazotrophicus (strain ATCC 49037 / DSM 5601 / CCUG 37298 / CIP 103539 / LMG 7603 / PAl5).